A 473-amino-acid chain; its full sequence is 3-isopropylmalate dehydratase large subunit 2 (473 aa).

[4Fe-4S] cluster-binding residues include Cys-350, Cys-410, and Cys-413.

The protein belongs to the aconitase/IPM isomerase family. LeuC type 1 subfamily. Heterodimer of LeuC and LeuD. Requires [4Fe-4S] cluster as cofactor.

The enzyme catalyses (2R,3S)-3-isopropylmalate = (2S)-2-isopropylmalate. It functions in the pathway amino-acid biosynthesis; L-leucine biosynthesis; L-leucine from 3-methyl-2-oxobutanoate: step 2/4. Functionally, catalyzes the isomerization between 2-isopropylmalate and 3-isopropylmalate, via the formation of 2-isopropylmaleate. The chain is 3-isopropylmalate dehydratase large subunit 2 from Salmonella choleraesuis (strain SC-B67).